The chain runs to 523 residues: Alpha,alpha-trehalose-phosphate synthase [UDP-forming] (523 aa).

Residues Tyr-98 and Asp-152 each contribute to the D-glucose 6-phosphate site. 2 residues coordinate UDP: Arg-288 and Lys-293. UDP-alpha-D-glucose contacts are provided by Arg-288 and Lys-293. Residue Arg-326 participates in D-glucose 6-phosphate binding. 387 to 395 (DGMNLVSYE) is a UDP-alpha-D-glucose binding site. Residue 391 to 395 (LVSYE) participates in UDP binding. The tract at residues 503-523 (QQFNLGEQREEGRLEPGEFDD) is disordered. Positions 509–523 (EQREEGRLEPGEFDD) are enriched in basic and acidic residues.

The protein belongs to the glycosyltransferase 20 family.

The enzyme catalyses D-glucose 6-phosphate + UDP-alpha-D-glucose = alpha,alpha-trehalose 6-phosphate + UDP + H(+). It participates in carbohydrate biosynthesis. In terms of biological role, synthase catalytic subunit of the trehalose synthase complex that catalyzes the production of trehalose from glucose-6-phosphate and UDP-alpha-D-glucose in a two step process. The disaccharide trehalose serves as a storage carbohydrate that is mobilized during conidial germination. Trehalose also serves as a protectant for cell integrity during stress. This Botryotinia fuckeliana (strain B05.10) (Noble rot fungus) protein is Alpha,alpha-trehalose-phosphate synthase [UDP-forming].